The following is a 306-amino-acid chain: Protein pxr1 (306 aa).

A compositionally biased stretch (basic residues) spans 1-11 (MGLAAPRKRTK). 2 disordered regions span residues 1–27 (MGLAAPRKRTKISHDPNNTNWSRSTSG) and 148–241 (AQKE…SDIP). Polar residues predominate over residues 15 to 27 (DPNNTNWSRSTSG). In terms of domain architecture, G-patch spans 25–79 (TSGYGHKIMSSQGWTPGSFLGARNAAHADMFTAASASHIRVVVKDDTLGLGARSK). A compositionally biased stretch (basic and acidic residues) spans 182 to 191 (NTLKALREEQ). Basic residues predominate over residues 219–228 (KKERKTKKRK).

It belongs to the PINX1 family.

Its subcellular location is the nucleus. It localises to the nucleolus. Involved in rRNA-processing at A0, A1 and A2 sites and negatively regulates telomerase. In Aspergillus oryzae (strain ATCC 42149 / RIB 40) (Yellow koji mold), this protein is Protein pxr1 (pxr1).